A 398-amino-acid chain; its full sequence is Probable transcription factor PosF21 (398 aa).

Disordered stretches follow at residues 1-46 (MDKE…HDIS) and 112-150 (ATSS…NSLG). Residues 7 to 19 (PAPPCGGLPPPSP) are compositionally biased toward pro residues. Residues 125 to 148 (AWKNETMMQTGTGSTSNPQNTVNS) are compositionally biased toward polar residues. Residues 201-264 (DPKRAKRIWA…NGLTVENNEL (64 aa)) form the bZIP domain. The basic motif stretch occupies residues 203–224 (KRAKRIWANRQSAARSKERKTR). The tract at residues 229 to 264 (LERKVQTLQTEATTLSAQLTLLQRDTNGLTVENNEL) is leucine-zipper.

Belongs to the bZIP family.

It localises to the nucleus. Functionally, putative transcription factor with an activatory role. The protein is Probable transcription factor PosF21 (POSF21) of Arabidopsis thaliana (Mouse-ear cress).